A 428-amino-acid chain; its full sequence is GTPase Obg (428 aa).

The Obg domain occupies 1 to 158; sequence MFVDQVQVEV…RFIKLELKVL (158 aa). The 175-residue stretch at 159 to 333 folds into the OBG-type G domain; it reads ADVGLVGFPS…LMHKTAEVLK (175 aa). Residues 165–172, 190–194, 212–215, 282–285, and 314–316 contribute to the GTP site; these read GFPSVGKS, FTTLV, DLPG, TKMD, and SSL. The Mg(2+) site is built by S172 and T192. Residues 350–428 enclose the OCT domain; that stretch reads YKYQPEPALK…IDDFTFEFVE (79 aa).

It belongs to the TRAFAC class OBG-HflX-like GTPase superfamily. OBG GTPase family. Monomer. Mg(2+) is required as a cofactor.

It is found in the cytoplasm. An essential GTPase which binds GTP, GDP and possibly (p)ppGpp with moderate affinity, with high nucleotide exchange rates and a fairly low GTP hydrolysis rate. Plays a role in control of the cell cycle, stress response, ribosome biogenesis and in those bacteria that undergo differentiation, in morphogenesis control. The polypeptide is GTPase Obg (Lacticaseibacillus casei (strain BL23) (Lactobacillus casei)).